Here is a 128-residue protein sequence, read N- to C-terminus: Protein Wnt-8 (128 aa).

The O-palmitoleoyl serine moiety is linked to residue serine 1. 2 disulfides stabilise this stretch: cysteine 69-cysteine 109 and cysteine 85-cysteine 102. Residue asparagine 72 is glycosylated (N-linked (GlcNAc...) asparagine).

It belongs to the Wnt family. Post-translationally, palmitoleoylation is required for efficient binding to frizzled receptors. Depalmitoleoylation leads to Wnt signaling pathway inhibition. In terms of processing, proteolytic processing by tiki1 and tiki2 promotes oxidation and formation of large disulfide-bond oligomers, leading to inactivation of wnt8.

It is found in the secreted. Its subcellular location is the extracellular space. It localises to the extracellular matrix. In terms of biological role, ligand for members of the frizzled family of seven transmembrane receptors. Probable developmental protein. May be a signaling molecule which affects the development of discrete regions of tissues. Is likely to signal over only few cell diameters. The sequence is that of Protein Wnt-8 (WNT-8) from Evasterias troschelii (Mottled sea star).